The primary structure comprises 513 residues: Bifunctional pantoate ligase/cytidylate kinase (513 aa).

The tract at residues M1–C282 is pantoate--beta-alanine ligase. Position 32–39 (M32–H39) interacts with ATP. The active-site Proton donor is H39. Q63 lines the (R)-pantoate pocket. Beta-alanine is bound at residue Q63. G152–D155 is an ATP binding site. Q158 provides a ligand contact to (R)-pantoate. ATP-binding positions include V181 and L189–R192. The cytidylate kinase stretch occupies residues L283–P513.

This sequence in the N-terminal section; belongs to the pantothenate synthetase family. It in the C-terminal section; belongs to the cytidylate kinase family. Type 1 subfamily.

It is found in the cytoplasm. The enzyme catalyses (R)-pantoate + beta-alanine + ATP = (R)-pantothenate + AMP + diphosphate + H(+). It catalyses the reaction CMP + ATP = CDP + ADP. The catalysed reaction is dCMP + ATP = dCDP + ADP. It functions in the pathway cofactor biosynthesis; (R)-pantothenate biosynthesis; (R)-pantothenate from (R)-pantoate and beta-alanine: step 1/1. In terms of biological role, catalyzes the condensation of pantoate with beta-alanine in an ATP-dependent reaction via a pantoyl-adenylate intermediate. Catalyzes the transfer of a phosphate group from ATP to either CMP or dCMP to form CDP or dCDP and ADP, respectively. The protein is Bifunctional pantoate ligase/cytidylate kinase of Thermosynechococcus vestitus (strain NIES-2133 / IAM M-273 / BP-1).